The primary structure comprises 359 residues: Peptide chain release factor 1 (359 aa).

At Gln236 the chain carries N5-methylglutamine.

Belongs to the prokaryotic/mitochondrial release factor family. Post-translationally, methylated by PrmC. Methylation increases the termination efficiency of RF1.

The protein resides in the cytoplasm. Its function is as follows. Peptide chain release factor 1 directs the termination of translation in response to the peptide chain termination codons UAG and UAA. This Mycoplasma genitalium (strain ATCC 33530 / DSM 19775 / NCTC 10195 / G37) (Mycoplasmoides genitalium) protein is Peptide chain release factor 1 (prfA).